A 503-amino-acid polypeptide reads, in one-letter code: Glucosaminyl-phosphatidylinositol-acyltransferase PIGW (503 aa).

The Lumenal portion of the chain corresponds to 1-21 (MSQKQMKEAFVSNQNGTSVLE). A glycan (N-linked (GlcNAc...) asparagine) is linked at asparagine 15. The helical transmembrane segment at 22-42 (ITEGLCLPALCILCRGLLIIL) threads the bilayer. Residues 43 to 56 (SQQLCSSLHNSRTR) are Cytoplasmic-facing. A helical membrane pass occupies residues 57-75 (FLVDFAFLIVPLVTTLTIF). Residues 76–78 (SSF) are Lumenal-facing. The helical transmembrane segment at 79-98 (VLLEYLVAIILGAGLLYEIY) threads the bilayer. Residues 99 to 131 (CRRTCYARMPFQKICEKFLKVSLESEHIPAISC) are Cytoplasmic-facing. Residues 132-152 (FRVVNSAFTAVAILAVDFPLF) form a helical membrane-spanning segment. Topologically, residues 153–160 (PRRYAKTE) are lumenal. A helical transmembrane segment spans residues 161-181 (LYGTGAMDYGVGGFIFGSAMV). At 182–201 (SPEVRRKYTKGSRFCYLTKS) the chain is on the cytoplasmic side. A helical transmembrane segment spans residues 202–222 (LYSLWPLVFLGVGRLVAIKSV). Over 223 to 236 (DYQEHLTEYGVHWN) the chain is Lumenal. Residues 237–257 (FFFTLIAVKLITSLLLLICPL) traverse the membrane as a helical segment. Over 258–259 (NR) the chain is Cytoplasmic. A helical transmembrane segment spans residues 260-280 (SWVVAISIAALYQLALDFTPL). The Lumenal portion of the chain corresponds to 281–304 (KSLILYGTDGSGTRVGLLNANREG). A helical membrane pass occupies residues 305–325 (IISVLGYVAVHMAGVQTGLYV). Residues 326 to 337 (LKKRSHIKDWIK) are Cytoplasmic-facing. The helical transmembrane segment at 338-358 (VACCILLTAIGLFISLYIVQV) threads the bilayer. Over 359 to 369 (NVEVASRRMAN) the chain is Lumenal. The helical transmembrane segment at 370 to 390 (LAFCIWIVASCLILLSSLLLG) threads the bilayer. Residues 391–447 (DIILSFAKFVIKEAAVPCSWKLIQSPTANKKHLESIVFDAKRKEPTLCLITAMNRNQ) are Cytoplasmic-facing. Phosphoserine is present on serine 415. A helical membrane pass occupies residues 448-468 (LLFFLLSNVTTGLVNLSIDTL). The Lumenal portion of the chain corresponds to 469 to 472 (HSST). The helical transmembrane segment at 473 to 493 (PWALCLLNLYMFTNCLIIYVL) threads the bilayer. At 494–503 (HLQDKTIKFW) the chain is on the cytoplasmic side.

The protein belongs to the PIGW family.

Its subcellular location is the endoplasmic reticulum membrane. The protein operates within glycolipid biosynthesis; glycosylphosphatidylinositol-anchor biosynthesis. Functionally, acyltransferase that catalyzes the acyl transfer from an acyl-CoA at the 2-OH position of the inositol ring of glucosaminyl phosphatidylinositol (GlcN-PI) to generate glucosaminyl acyl phosphatidylinositol (GlcN-(acyl)PI) and participates in the fourth step of GPI-anchor biosynthesis. Required for the transport of GPI-anchored proteins to the plasma membrane. Acetylation during GPI-anchor biosynthesis is not essential for the subsequent mannosylation and is usually removed soon after the attachment of GPIs to proteins. In Bos taurus (Bovine), this protein is Glucosaminyl-phosphatidylinositol-acyltransferase PIGW.